Reading from the N-terminus, the 62-residue chain is Small ribosomal subunit protein uS14 (62 aa).

Zn(2+) contacts are provided by Cys25, Cys28, Cys41, and Cys44.

Belongs to the universal ribosomal protein uS14 family. Zinc-binding uS14 subfamily. As to quaternary structure, part of the 30S ribosomal subunit. Contacts proteins S3 and S10. Zn(2+) serves as cofactor.

Functionally, binds 16S rRNA, required for the assembly of 30S particles and may also be responsible for determining the conformation of the 16S rRNA at the A site. The protein is Small ribosomal subunit protein uS14 of Persephonella marina (strain DSM 14350 / EX-H1).